We begin with the raw amino-acid sequence, 156 residues long: IFN signaling evasion protein OPG029 (156 aa).

This sequence belongs to the orthopoxvirus OPG029 family. Interacts with host TANK, TBKBP1 and AZI2; these interactions prevent interferon production. Interacts with host STAT2.

In terms of biological role, prevents establishment of cellular antiviral state by blocking virus-induced phosphorylation and activation of interferon regulatory factors 3/IRF3 and 7/IRF7, transcription factors critical for the induction of interferons alpha and beta. This blockage is produced through the inhibition of host TBK1, by binding host TBK1 adapter proteins TBKBP1 and AZI2, thereby producing a strong inhibition of the phosphorylation and activation of IRF3 and IRF7. Also acts as an inhibitor of the cellular response to type I IFN by interacting with host STAT2. Mechanistically, exerts its inhibitory effect after host ISGF3 complex (composed of STAT1, STAT2 and IRF9) binding to the interferon stimulated response element (ISRE). The polypeptide is IFN signaling evasion protein OPG029 (OPG029) (Variola virus (isolate Human/India/Ind3/1967) (VARV)).